Here is a 205-residue protein sequence, read N- to C-terminus: SCO2-like protein RC0895 (205 aa).

Residues C82, C86, and H172 each coordinate Cu cation.

Belongs to the SCO1/2 family.

The sequence is that of SCO2-like protein RC0895 from Rickettsia conorii (strain ATCC VR-613 / Malish 7).